The following is a 183-amino-acid chain: UPF0302 protein BH3876 (183 aa).

It belongs to the UPF0302 family.

This is UPF0302 protein BH3876 from Halalkalibacterium halodurans (strain ATCC BAA-125 / DSM 18197 / FERM 7344 / JCM 9153 / C-125) (Bacillus halodurans).